The following is a 473-amino-acid chain: Presenilin-B (473 aa).

The tract at residues 1 to 141 (MSSDNNNDPF…PLLNKKEKDD (141 aa)) is disordered. At 1–164 (MSSDNNNDPF…DDEVSLQDFS (164 aa)) the chain is on the cytoplasmic side. Positions 22-46 (RVSTTTSPNRQSINSSPKQSSPKST) are enriched in polar residues. Residues 54–72 (NIILDLNDNNNDNNNTNNY) are compositionally biased toward low complexity. Residues 79–89 (VDNKNKFENKD) are compositionally biased toward basic and acidic residues. The helical transmembrane segment at 165–185 (SMIVSIIIPVSITMMAVVFFV) threads the bilayer. Residues 186-224 (KYLNNQTLYASTLSYTIAGGSSGGGSGADSITGNSFVDS) are Lumenal-facing. Residue Asn-190 is glycosylated (N-linked (GlcNAc...) asparagine). A helical membrane pass occupies residues 225 to 245 (LIVAGIVLGMIIVTTVAFVLL). Over 246–252 (YKYRCLK) the chain is Cytoplasmic. A helical membrane pass occupies residues 253–273 (ILYGWLFLSVGMMLGSFGTTF). Residues 274–286 (FQAMLSAANLPLD) are Lumenal-facing. A helical transmembrane segment spans residues 287-307 (YITFAFLIFNFTVCGIIGVFW). Tyr-308 is a topological domain (cytoplasmic). The chain crosses the membrane as a helical span at residues 309–329 (AHQYVNQLYLVIISVLMAISL). Residues 330–334 (TRLPQ) lie on the Lumenal side of the membrane. The helical transmembrane segment at 335-355 (WTIFTLLVIVAIYDLFAVLCP) threads the bilayer. Asp-348 is an active-site residue. The Cytoplasmic portion of the chain corresponds to 356 to 389 (RGPLKVLVELSQERNENIPALVYETGKGSDSNLK). A helical membrane pass occupies residues 390-410 (LGLGDFIFYSLLISRAALVHM). Residue Asp-394 is part of the active site. The Lumenal portion of the chain corresponds to 411–413 (SCV). Residues 414 to 434 (FSTFIAILTGLFLTLLCLAIF) form a helical membrane-spanning segment. Topologically, residues 435–442 (KKALPALP) are cytoplasmic. Residues 439–441 (PAL) carry the PAL motif. The segment at residues 443–463 (ISIFLGILFYYLSNNFLTPFI) is an intramembrane region (helical). The Cytoplasmic segment spans residues 464-473 (EALTLSQIFV).

Belongs to the peptidase A22A family. As to quaternary structure, homodimer. Component of the gamma-secretase complex, a complex composed of a presenilin homodimer, nicastrin, aph1 and pen2.

The protein localises to the endoplasmic reticulum membrane. Its subcellular location is the golgi apparatus membrane. Its function is as follows. Probable catalytic subunit of the gamma-secretase complex, an endoprotease complex that catalyzes the intramembrane cleavage of integral membrane proteins such as Notch receptors. Requires the other members of the gamma-secretase complex to have a protease activity. The sequence is that of Presenilin-B (psenB) from Dictyostelium discoideum (Social amoeba).